The primary structure comprises 356 residues: Protein RecA (356 aa).

An ATP-binding site is contributed by 77–84; the sequence is GPESSGKT.

The protein belongs to the RecA family.

The protein resides in the cytoplasm. Functionally, can catalyze the hydrolysis of ATP in the presence of single-stranded DNA, the ATP-dependent uptake of single-stranded DNA by duplex DNA, and the ATP-dependent hybridization of homologous single-stranded DNAs. It interacts with LexA causing its activation and leading to its autocatalytic cleavage. This is Protein RecA from Caulobacter vibrioides (strain ATCC 19089 / CIP 103742 / CB 15) (Caulobacter crescentus).